A 47-amino-acid polypeptide reads, in one-letter code: MENSSSETYSLLIAMVTITFGLTGYGLYTAFGPPSKELEDPFEEHED.

A helical membrane pass occupies residues 9–31; that stretch reads YSLLIAMVTITFGLTGYGLYTAF.

Belongs to the PsbN family.

The protein resides in the cellular thylakoid membrane. May play a role in photosystem I and II biogenesis. This Prochlorococcus marinus (strain MIT 9303) protein is Protein PsbN.